The primary structure comprises 227 residues: Type II restriction enzyme ScaI (227 aa).

A disordered region spans residues 12 to 35 (EARVGTRTGGPAMRPKTSDSPYFG).

It catalyses the reaction Endonucleolytic cleavage of DNA to give specific double-stranded fragments with terminal 5'-phosphates.. A P subtype restriction enzyme that recognizes the double-stranded sequence 5'-AGTACT-3' and cleaves after T-3. This is Type II restriction enzyme ScaI from Streptomyces caespitosus.